The primary structure comprises 155 residues: uncharacterized protein (155 aa).

The tract at residues 1–34 (MESLQTPQHRENQDKREKEYGVKHMPMGNNAGNL) is disordered. Residues 8 to 22 (QHRENQDKREKEYGV) are compositionally biased toward basic and acidic residues. Residues 115 to 135 (MSLLLLPAFSGLTWAPFLFLF) form a helical membrane-spanning segment.

It is found in the membrane. This is an uncharacterized protein from Homo sapiens (Human).